A 1818-amino-acid chain; its full sequence is Cytadherence high molecular weight protein 2 (1818 aa).

4 coiled-coil regions span residues 31–880 (LESA…KQRE), 919–1607 (ELKI…DNKH), 1644–1755 (HLFE…QAVQ), and 1786–1817 (LATQQSISKQQQIAQLNAEINSIKKLIAQKAA).

Phosphorylated mainly on serine residues.

Component of the cytoskeleton-like structure which stabilizes the shape of the wall-less Mycoplasma. This cytoskeleton-like network of accessory proteins containing HMW proteins 1 to 5 allows the proper anchoring of cytadhesin proteins in the mycoplasmal membrane at the attachment organelle. The chain is Cytadherence high molecular weight protein 2 (hmw2) from Mycoplasma pneumoniae (strain ATCC 29342 / M129 / Subtype 1) (Mycoplasmoides pneumoniae).